The following is a 96-amino-acid chain: Large ribosomal subunit protein bL28 (96 aa).

The segment covering 1 to 22 has biased composition (polar residues); the sequence is MSRSCELTGKGVQSGNNVSHAN. Residues 1–24 are disordered; that stretch reads MSRSCELTGKGVQSGNNVSHANNK.

Belongs to the bacterial ribosomal protein bL28 family.

In Rhizobium meliloti (strain 1021) (Ensifer meliloti), this protein is Large ribosomal subunit protein bL28.